The sequence spans 160 residues: Cytochrome b6-f complex subunit 4 (160 aa).

3 helical membrane-spanning segments follow: residues 36 to 56, 95 to 115, and 131 to 151; these read LLYI…GLAV, LLGV…PFLE, and TVFL…TLPI.

This sequence belongs to the cytochrome b family. PetD subfamily. The 4 large subunits of the cytochrome b6-f complex are cytochrome b6, subunit IV (17 kDa polypeptide, petD), cytochrome f and the Rieske protein, while the 4 small subunits are petG, petL, petM and petN. The complex functions as a dimer.

Its subcellular location is the plastid. It localises to the chloroplast thylakoid membrane. Its function is as follows. Component of the cytochrome b6-f complex, which mediates electron transfer between photosystem II (PSII) and photosystem I (PSI), cyclic electron flow around PSI, and state transitions. The polypeptide is Cytochrome b6-f complex subunit 4 (Sorghum bicolor (Sorghum)).